The following is a 403-amino-acid chain: MQSIKRTLLLLGAVLPAVLAGPIFPHRRAPTTIPGKYIVTFKSDVDQAAIDKHTAWATDIHKRNLQRRDSSEEDLPIGIERNFKINKFAAYSGSFDEDTIAQIRQSDEVAAVEEDQVWHLFDLTTQSDAPWGLGSISHKGQPSTDYIYDTNGGEGTYAYVVDIGINVDHEEFEGRASLAYHAAGGQHVDGVGHGTHVSGTIGGKTYGVAKKANLLSVKVFVGESSSTSIILDGFNWAANDIVSKKRTGKAAINMSLGGGYSKAFNDAVENAFNEGVLSIVAAGNENTDASRTSPASAPDAFTVAAINVNNTRAYFSNYGSVVDIFAPGQNILSAWIGSNTATNTISGTSMATPHIVGLSIYLMSLEVLSSPKAVSDRIKELATRGVVSNVAGSPNLLAYNGNA.

The N-terminal stretch at 1–21 is a signal peptide; sequence MQSIKRTLLLLGAVLPAVLAG. The propeptide occupies 22 to 121; it reads PIFPHRRAPT…VEEDQVWHLF (100 aa). An Inhibitor I9 domain is found at 36 to 120; it reads KYIVTFKSDV…AVEEDQVWHL (85 aa). Residues 130-403 enclose the Peptidase S8 domain; it reads PWGLGSISHK…PNLLAYNGNA (274 aa). Catalysis depends on charge relay system residues Asp162 and His193. 2 N-linked (GlcNAc...) asparagine glycosylation sites follow: Asn253 and Asn309. Ser349 functions as the Charge relay system in the catalytic mechanism.

It belongs to the peptidase S8 family.

It localises to the secreted. It carries out the reaction Hydrolysis of proteins with broad specificity, and of Bz-Arg-OEt &gt; Ac-Tyr-OEt. Does not hydrolyze peptide amides.. Functionally, secreted alkaline protease that allows assimilation of proteinaceous substrates. This Aspergillus flavus protein is Alkaline protease 1 (alp1).